We begin with the raw amino-acid sequence, 145 residues long: uncharacterized protein (145 aa).

The first 26 residues, 1–26, serve as a signal peptide directing secretion; that stretch reads MAILLPLKSILPWCCITFSFLLSSSG.

This is an uncharacterized protein from Saccharomyces cerevisiae (strain ATCC 204508 / S288c) (Baker's yeast).